Consider the following 341-residue polypeptide: uncharacterized protein (341 aa).

This sequence belongs to the Gfo/Idh/MocA family.

This is an uncharacterized protein from Bacillus subtilis (strain 168).